Reading from the N-terminus, the 307-residue chain is Homoserine O-acetyltransferase (307 aa).

The Acyl-thioester intermediate role is filled by Cys142. Lys163 and Ser192 together coordinate substrate. His235 (proton acceptor) is an active-site residue. Glu237 is a catalytic residue. Arg249 contacts substrate.

Belongs to the MetA family.

The protein localises to the cytoplasm. It carries out the reaction L-homoserine + acetyl-CoA = O-acetyl-L-homoserine + CoA. It participates in amino-acid biosynthesis; L-methionine biosynthesis via de novo pathway; O-acetyl-L-homoserine from L-homoserine: step 1/1. Its function is as follows. Transfers an acetyl group from acetyl-CoA to L-homoserine, forming acetyl-L-homoserine. The sequence is that of Homoserine O-acetyltransferase from Desulfitobacterium hafniense (strain Y51).